Consider the following 74-residue polypeptide: Large ribosomal subunit protein bL31 (74 aa).

Positions 16, 18, 38, and 41 each coordinate Zn(2+).

It belongs to the bacterial ribosomal protein bL31 family. Type A subfamily. Part of the 50S ribosomal subunit. Zn(2+) is required as a cofactor.

Binds the 23S rRNA. This chain is Large ribosomal subunit protein bL31, found in Mycolicibacterium vanbaalenii (strain DSM 7251 / JCM 13017 / BCRC 16820 / KCTC 9966 / NRRL B-24157 / PYR-1) (Mycobacterium vanbaalenii).